The following is a 298-amino-acid chain: Enoyl-CoA hydratase AFT6-1 (298 aa).

The interval 1–39 (MTYSTTKSVAMNPDEDAPPSDINSSGRLMSHSEVEPRGN) is disordered.

Belongs to the enoyl-CoA hydratase/isomerase family.

The enzyme catalyses a (3S)-3-hydroxyacyl-CoA = a (2E)-enoyl-CoA + H2O. It carries out the reaction a 4-saturated-(3S)-3-hydroxyacyl-CoA = a (3E)-enoyl-CoA + H2O. Its pathway is mycotoxin biosynthesis. Its function is as follows. Enoyl-CoA hydratase; part of the gene clusters that mediate the biosynthesis of the host-selective toxins (HSTs) AF-toxins responsible for Alternaria black spot of strawberry disease by the strawberry pathotype. AF-toxin I and III are valine derivatives of 2,3-dyhydroxy-isovaleric acid and 2-hydroxy-isovaleric acid respectively, while AF II is an isoleucine derivative of 2-hydroxy-valeric acid. These derivatives are bound to a 9,10-epoxy-8-hydroxy-9-methyl-decatrienoic acid (EDA) moiety. On cellular level, AF-toxin affects plasma membrane of susceptible cells and cause a sudden increase in loss of K(+) after a few minutes of toxin treatment. The aldo-keto reductase AFTS1 catalyzes the conversion of 2-keto-isovaleric acid (2-KIV) to 2-hydroxy-isovaleric acid (2-HIV) by reduction of its ketone to an alcohol. The acyl-CoA ligase AFT1, the hydrolase AFT2 and the enoyl-CoA hydratases AFT3 and AFT6, but also the polyketide synthase AFT9, the acyl-CoA dehydrogenase AFT10, the cytochrome P450 monooxygenase AFT11 and the oxidoreductase AFT12 are all involved in the biosynthesis of the AK-, AF- and ACT-toxin common EDA structural moiety. The exact function of each enzyme, and of additional enzymes identified within the AF-toxin clusters have still to be determined. This chain is Enoyl-CoA hydratase AFT6-1, found in Alternaria alternata (Alternaria rot fungus).